Consider the following 105-residue polypeptide: Small ribosomal subunit protein uS10 (105 aa).

Belongs to the universal ribosomal protein uS10 family. Part of the 30S ribosomal subunit.

Involved in the binding of tRNA to the ribosomes. The sequence is that of Small ribosomal subunit protein uS10 from Crocosphaera subtropica (strain ATCC 51142 / BH68) (Cyanothece sp. (strain ATCC 51142)).